Reading from the N-terminus, the 421-residue chain is Large ribosomal subunit protein uL4 (421 aa).

The residue at position 2 (alanine 2) is an N-acetylalanine. Lysine 14 carries the post-translational modification N6-acetyllysine. Arginine 97 is modified (omega-N-methylarginine). The residue at position 106 (lysine 106) is an N6-acetyllysine. A Glycyl lysine isopeptide (Lys-Gly) (interchain with G-Cter in SUMO2) cross-link involves residue lysine 239. Lysine 259 is subject to N6-acetyllysine. A Phosphothreonine modification is found at threonine 266. Serine 290 carries the phosphoserine modification. Arginine 300 carries the citrulline modification. Residue lysine 327 forms a Glycyl lysine isopeptide (Lys-Gly) (interchain with G-Cter in SUMO2) linkage. Lysine 333 and lysine 353 each carry N6-acetyllysine. The interval 359-421 (EAKSEEKGVP…PTTEEKKPAA (63 aa)) is disordered. Lysine 361 is modified (N6-acetyllysine; alternate). Residue lysine 361 forms a Glycyl lysine isopeptide (Lys-Gly) (interchain with G-Cter in SUMO1); alternate linkage. Phosphoserine is present on serine 362. Over residues 368 to 391 (PGKKPRRKKGKKTVGVKKPKKPVV) the composition is skewed to basic residues. The segment covering 401-421 (PAADKKPAEKKPTTEEKKPAA) has biased composition (basic and acidic residues).

The protein belongs to the universal ribosomal protein uL4 family. Component of the large ribosomal subunit. May bind IPO9 with low affinity. Interacts with RBM3. Citrullinated by PADI4.

It is found in the cytoplasm. Functionally, component of the large ribosomal subunit. The ribosome is a large ribonucleoprotein complex responsible for the synthesis of proteins in the cell. This Canis lupus familiaris (Dog) protein is Large ribosomal subunit protein uL4 (RPL4).